The primary structure comprises 576 residues: Lysine--tRNA ligase, mitochondrial (576 aa).

The transit peptide at 1–30 (MNVLLKRRSLTFAPRWLWCKCRSSRSRPYS) directs the protein to the mitochondrion.

This sequence belongs to the class-II aminoacyl-tRNA synthetase family.

The protein localises to the mitochondrion matrix. It catalyses the reaction tRNA(Lys) + L-lysine + ATP = L-lysyl-tRNA(Lys) + AMP + diphosphate. Its function is as follows. Catalyzes the attachment of lysine to tRNA(Lys) in the mitochondrion. This chain is Lysine--tRNA ligase, mitochondrial (MSK1), found in Saccharomyces cerevisiae (strain ATCC 204508 / S288c) (Baker's yeast).